The primary structure comprises 239 residues: 1-(5-phosphoribosyl)-5-[(5-phosphoribosylamino)methylideneamino] imidazole-4-carboxamide isomerase (239 aa).

The active-site Proton acceptor is the aspartate 8. The Proton donor role is filled by aspartate 129.

This sequence belongs to the HisA/HisF family.

Its subcellular location is the cytoplasm. The enzyme catalyses 1-(5-phospho-beta-D-ribosyl)-5-[(5-phospho-beta-D-ribosylamino)methylideneamino]imidazole-4-carboxamide = 5-[(5-phospho-1-deoxy-D-ribulos-1-ylimino)methylamino]-1-(5-phospho-beta-D-ribosyl)imidazole-4-carboxamide. It participates in amino-acid biosynthesis; L-histidine biosynthesis; L-histidine from 5-phospho-alpha-D-ribose 1-diphosphate: step 4/9. The protein is 1-(5-phosphoribosyl)-5-[(5-phosphoribosylamino)methylideneamino] imidazole-4-carboxamide isomerase of Bacillus cereus (strain ATCC 10987 / NRS 248).